The sequence spans 75 residues: Large ribosomal subunit protein bL31 (75 aa).

The protein belongs to the bacterial ribosomal protein bL31 family. Type A subfamily. Part of the 50S ribosomal subunit.

Its function is as follows. Binds the 23S rRNA. This chain is Large ribosomal subunit protein bL31, found in Chlorobium phaeovibrioides (strain DSM 265 / 1930) (Prosthecochloris vibrioformis (strain DSM 265)).